The following is a 404-amino-acid chain: Deoxyguanosinetriphosphate triphosphohydrolase-like protein (404 aa).

A disordered region spans residues 1–33 (MSVGMAAPRAAYGCDPDRSRGRQFAEPPSNNRS). The HD domain maps to 69–217 (RLTHSLEVAQ…AAIADDIAYD (149 aa)).

This sequence belongs to the dGTPase family. Type 2 subfamily.

This chain is Deoxyguanosinetriphosphate triphosphohydrolase-like protein, found in Rhodopseudomonas palustris (strain BisB5).